The sequence spans 98 residues: DNA-binding protein Fis (98 aa).

The segment at residues 74–93 is a DNA-binding region (H-T-H motif); the sequence is QTRAAQMMGINRGTLRKKLK.

This sequence belongs to the transcriptional regulatory Fis family. In terms of assembly, homodimer.

Functionally, activates ribosomal RNA transcription. Plays a direct role in upstream activation of rRNA promoters. The protein is DNA-binding protein Fis of Proteus hauseri.